Here is a 211-residue protein sequence, read N- to C-terminus: PITH domain-containing protein CG6153 (211 aa).

Residues 20–192 (DHALEMGIEY…GVTICNYESR (173 aa)) form the PITH domain.

The protein belongs to the PITHD1 family.

This is PITH domain-containing protein CG6153 from Drosophila melanogaster (Fruit fly).